Consider the following 393-residue polypeptide: Probable acetyl-CoA acetyltransferase (393 aa).

Residue Cys-88 is the Acyl-thioester intermediate of the active site. Residues His-349 and Cys-379 each act as proton acceptor in the active site.

The protein belongs to the thiolase-like superfamily. Thiolase family.

It carries out the reaction 2 acetyl-CoA = acetoacetyl-CoA + CoA. The chain is Probable acetyl-CoA acetyltransferase (fadA4) from Mycobacterium leprae (strain TN).